A 251-amino-acid chain; its full sequence is Adenosine 5'-phosphosulfate reductase (251 aa).

[4Fe-4S] cluster contacts are provided by cysteine 121, cysteine 122, cysteine 204, and cysteine 207. Cysteine 232 acts as the Nucleophile; cysteine thiosulfonate intermediate in catalysis.

The protein belongs to the PAPS reductase family. CysH subfamily. [4Fe-4S] cluster serves as cofactor.

It is found in the cytoplasm. The catalysed reaction is [thioredoxin]-disulfide + sulfite + AMP + 2 H(+) = adenosine 5'-phosphosulfate + [thioredoxin]-dithiol. Its pathway is sulfur metabolism; hydrogen sulfide biosynthesis; sulfite from sulfate. Catalyzes the formation of sulfite from adenosine 5'-phosphosulfate (APS) using thioredoxin as an electron donor. The protein is Adenosine 5'-phosphosulfate reductase of Sinorhizobium fredii (strain USDA 257).